We begin with the raw amino-acid sequence, 327 residues long: Golgi to ER traffic protein 4 homolog (327 aa).

Alanine 2 is subject to N-acetylalanine. The residue at position 12 (serine 12) is a Phosphoserine. The interval 195–271 is interacts with BAG6; that stretch reads FVAQAVLQFL…YQPSLRRDPM (77 aa). A disordered region spans residues 307–327; that stretch reads GSSEQEDGEESPSDGSPIELD.

It belongs to the GET4 family. In terms of assembly, component of the BAG6/BAT3 complex, at least composed of BAG6, UBL4A and GET4/TRC35. Interacts with BAG6; the interaction is direct and localizes BAG6 to the cytosol. Interacts with GET3. In terms of processing, ubiquitinated by RNF12, leading to proteasomal degradation. When unassembled from BAG6; ubiquitinylation is modulated by BAG6 quality control role and effectuated by RNF126.

It localises to the cytoplasm. It is found in the cytosol. Functionally, as part of a cytosolic protein quality control complex, the BAG6/BAT3 complex, maintains misfolded and hydrophobic patches-containing proteins in a soluble state and participates in their proper delivery to the endoplasmic reticulum or alternatively can promote their sorting to the proteasome where they undergo degradation. The BAG6/BAT3 complex is involved in the post-translational delivery of tail-anchored/type II transmembrane proteins to the endoplasmic reticulum membrane. Recruited to ribosomes, it interacts with the transmembrane region of newly synthesized tail-anchored proteins and together with SGTA and ASNA1 mediates their delivery to the endoplasmic reticulum. Client proteins that cannot be properly delivered to the endoplasmic reticulum are ubiquitinated and sorted to the proteasome. Similarly, the BAG6/BAT3 complex also functions as a sorting platform for proteins of the secretory pathway that are mislocalized to the cytosol either delivering them to the proteasome for degradation or to the endoplasmic reticulum. The BAG6/BAT3 complex also plays a role in the endoplasmic reticulum-associated degradation (ERAD), a quality control mechanism that eliminates unwanted proteins of the endoplasmic reticulum through their retrotranslocation to the cytosol and their targeting to the proteasome. It maintains these retrotranslocated proteins in an unfolded yet soluble state condition in the cytosol to ensure their proper delivery to the proteasome. The chain is Golgi to ER traffic protein 4 homolog from Homo sapiens (Human).